The following is a 127-amino-acid chain: uncharacterized protein (127 aa).

This is an uncharacterized protein from Haemophilus influenzae (strain ATCC 51907 / DSM 11121 / KW20 / Rd).